The sequence spans 327 residues: Inactive peptidyl-prolyl cis-trans isomerase FKBP6 (327 aa).

In terms of domain architecture, PPIase FKBP-type spans 54–143; it reads DASVLVKYSG…LFEIELLDFL (90 aa). TPR repeat units lie at residues 171–204, 219–252, and 253–286; these read AATEREFGNYLFRQNRFYDAKVRYKRALLLLRRR, LPVLLNLSFTYLKLDRPTIALCYGEQALIIDQKN, and AKALFRCGQACLLLTEYQKARDFLVRAQKEQPFN.

Belongs to the FKBP6 family. In terms of assembly, interacts (via TPR repeats) with HSP90. Interacts with HSP72/HSPA2 and CLTC. Interacts with GAPDH; leading to inhibit GAPDH catalytic activity. As to expression, detected in all tissues examined, with higher expression in testis, heart, skeletal muscle, liver, and kidney.

The protein localises to the cytoplasm. It is found in the nucleus. Its function is as follows. Has an essential role in spermatogenesis. It is required to repress transposable elements and prevent their mobilization, which is essential for the germline integrity. Acts via the piRNA metabolic process, which mediates the repression of transposable elements during meiosis by forming complexes composed of piRNAs and Piwi proteins and govern the methylation and subsequent repression of transposons. Acts as a co-chaperone via its interaction with HSP90 and is required for the piRNA amplification process, the secondary piRNA biogenesis. May be required together with HSP90 in removal of 16 nucleotide ping-pong by-products from Piwi complexes, possibly facilitating turnover of Piwi complexes. In Homo sapiens (Human), this protein is Inactive peptidyl-prolyl cis-trans isomerase FKBP6 (FKBP6).